Consider the following 420-residue polypeptide: UDP-N-acetylglucosamine 1-carboxyvinyltransferase (420 aa).

Residue 22-23 coordinates phosphoenolpyruvate; that stretch reads KN. Residue arginine 93 coordinates UDP-N-acetyl-alpha-D-glucosamine. Cysteine 117 acts as the Proton donor in catalysis. Residue cysteine 117 is modified to 2-(S-cysteinyl)pyruvic acid O-phosphothioketal. The UDP-N-acetyl-alpha-D-glucosamine site is built by aspartate 307 and isoleucine 329.

This sequence belongs to the EPSP synthase family. MurA subfamily.

The protein localises to the cytoplasm. It catalyses the reaction phosphoenolpyruvate + UDP-N-acetyl-alpha-D-glucosamine = UDP-N-acetyl-3-O-(1-carboxyvinyl)-alpha-D-glucosamine + phosphate. The protein operates within cell wall biogenesis; peptidoglycan biosynthesis. Cell wall formation. Adds enolpyruvyl to UDP-N-acetylglucosamine. This Saccharophagus degradans (strain 2-40 / ATCC 43961 / DSM 17024) protein is UDP-N-acetylglucosamine 1-carboxyvinyltransferase.